Consider the following 617-residue polypeptide: MGKIIGIDLGTTNSCVAVLEGGEPTVIPNAEGNRTTPSVVAYTKKGERIVGEPAKRQAITNPDQTIRSIKRHMGTDHKVTLNDKEYTPQEISAMILQKLKRDAEEYLGEEVNEAVITVPAYFTDSQRQATKDAGRIAGLEVKRIINEPTAAALAYGLDKEGDKTILVFDLGGGTFDVSLLEIGDGVFEVVATSGNNHLGGDDFDKRIIDYLAENFKKEYGVDLRDDRMALQRLKDAAEKAKKELSSVKTTNINLPFITQTEDGPKHLDIDLTRAKFNELTEDLVEKTMGPTRQALKDAGLEPGDIDEVILVGGSTRIPAVQEAVKDFIGKAPHKGINPDEVVAMGAAIQAGVLAGDVDDIVLLDVTPLSLGIETLGGVFTKLIERNTTIPTSKKKVFTTAADNQTSVDIHVLQGERKLAKDNVTLGRFQLTGIPPAPRGVPQIEVKFDIDANGIVHVSAKDLGTGKKQQITIKSSSGLSEDEIEKMVNDARKHEEEDKKRLEEIEARNEADSLVYQTEKTLKESGDKVSKDVKDKVEKAKDELKKALEGDDVDQIKEKTEALKNELTELSSQLYAQAQQQAQQQAQGQQGAQTDNQTGQNDGKTIDVDYEEVDDDDK.

Thr174 is subject to Phosphothreonine; by autocatalysis. Over residues 575–592 (AQAQQQAQQQAQGQQGAQ) the composition is skewed to low complexity. A disordered region spans residues 575 to 617 (AQAQQQAQQQAQGQQGAQTDNQTGQNDGKTIDVDYEEVDDDDK). Residues 593–602 (TDNQTGQNDG) are compositionally biased toward polar residues. The span at 607–617 (VDYEEVDDDDK) shows a compositional bias: acidic residues.

This sequence belongs to the heat shock protein 70 family.

In terms of biological role, acts as a chaperone. The chain is Chaperone protein DnaK from Halothermothrix orenii (strain H 168 / OCM 544 / DSM 9562).